The following is a 124-amino-acid chain: Large ribosomal subunit protein bL21 (124 aa).

The segment at 105–124 is disordered; the sequence is TVKAEPKSKRAPAPEAAADA. Residues 115–124 show a composition bias toward low complexity; the sequence is APAPEAAADA.

It belongs to the bacterial ribosomal protein bL21 family. As to quaternary structure, part of the 50S ribosomal subunit. Contacts protein L20.

Its function is as follows. This protein binds to 23S rRNA in the presence of protein L20. The polypeptide is Large ribosomal subunit protein bL21 (Xanthobacter autotrophicus (strain ATCC BAA-1158 / Py2)).